Consider the following 428-residue polypeptide: L-rhamnonate dehydratase (428 aa).

Substrate contacts are provided by His-56 and Arg-82. Residues Asp-249, Glu-275, and Glu-303 each coordinate Mg(2+). The active-site Proton acceptor is the His-352. Glu-372 is a binding site for substrate.

Belongs to the mandelate racemase/muconate lactonizing enzyme family. RhamD subfamily. As to quaternary structure, homooctamer; tetramer of dimers. Requires Mg(2+) as cofactor.

It carries out the reaction L-rhamnonate = 2-dehydro-3-deoxy-L-rhamnonate + H2O. Its function is as follows. Catalyzes the dehydration of L-rhamnonate to 2-keto-3-deoxy-L-rhamnonate (KDR). This is L-rhamnonate dehydratase from Shigella sonnei (strain Ss046).